The chain runs to 205 residues: NAD(P)H dehydrogenase (quinone) (205 aa).

The Flavodoxin-like domain occupies 3 to 194 (VLVVYYSMYG…AAARYQGKHV (192 aa)). FMN is bound by residues 9 to 14 (SMYGHI) and 82 to 84 (TRF). Tyrosine 11 contacts NAD(+). Tryptophan 102 is a substrate binding site. An FMN-binding site is contributed by histidine 138.

Belongs to the WrbA family. The cofactor is FMN.

The catalysed reaction is a quinone + NADH + H(+) = a quinol + NAD(+). It carries out the reaction a quinone + NADPH + H(+) = a quinol + NADP(+). The chain is NAD(P)H dehydrogenase (quinone) from Geotalea daltonii (strain DSM 22248 / JCM 15807 / FRC-32) (Geobacter daltonii).